Reading from the N-terminus, the 269-residue chain is Bis(5'-nucleosyl)-tetraphosphatase, symmetrical (269 aa).

This sequence belongs to the Ap4A hydrolase family.

The enzyme catalyses P(1),P(4)-bis(5'-adenosyl) tetraphosphate + H2O = 2 ADP + 2 H(+). Its function is as follows. Hydrolyzes diadenosine 5',5'''-P1,P4-tetraphosphate to yield ADP. This chain is Bis(5'-nucleosyl)-tetraphosphatase, symmetrical, found in Vibrio vulnificus (strain CMCP6).